Reading from the N-terminus, the 452-residue chain is MHQRALLFSALLTAVRAQQAGTLTEEVHPSLTWQKCTSEGSCTEQSGSVVIDSNWRWTHSVNDSTNCYTGNTWDATLCPDDETCAANCALDGADYESTYGVTTDGDSLTLKFVTGSNVGSRLYLMDTSDEGYQTFNLLDAEFTFDVDVSNLPCGLNGALYFTAMDADGGVSKYPANKAGAKYGTGYCDSQCPRDLKFIDGQANVDGWEPSSNNDNTGIGNHGSCCPEMDIWEANKISTALTPHPCDSSEQTMCEGNDCGGTYSDDRYGGTCDPDGCDFNPYRMGNDSFYGPGKTIDTGSKMTVVTQFITDGSGSLSEIKRYYVQNGNVIANADSNISGVTGNSITTDFCTAQKKAFGDEDIFAEHNGLAGISDAMSSMVLILSLWDDYYASMEWLDSDYPENATATDPGVARGTCDSESGVPATVEGAHPDSSVTFSNIKFGPINSTFSASA.

An N-terminal signal peptide occupies residues 1 to 17 (MHQRALLFSALLTAVRA). The N-linked (GlcNAc...) asparagine glycan is linked to Asn62. The active-site Nucleophile is the Glu227. The active-site Proton donor is the Glu232. N-linked (GlcNAc...) asparagine glycans are attached at residues Asn285, Asn335, Asn402, and Asn445.

The protein belongs to the glycosyl hydrolase 7 (cellulase C) family.

The protein localises to the secreted. The catalysed reaction is Hydrolysis of (1-&gt;4)-beta-D-glucosidic linkages in cellulose and cellotetraose, releasing cellobiose from the non-reducing ends of the chains.. In terms of biological role, the biological conversion of cellulose to glucose generally requires three types of hydrolytic enzymes: (1) Endoglucanases which cut internal beta-1,4-glucosidic bonds; (2) Exocellobiohydrolases that cut the disaccharide cellobiose from the non-reducing end of the cellulose polymer chain; (3) Beta-1,4-glucosidases which hydrolyze the cellobiose and other short cello-oligosaccharides to glucose. The protein is 1,4-beta-D-glucan cellobiohydrolase A (cbhA) of Aspergillus niger.